A 358-amino-acid chain; its full sequence is Probable G-protein coupled receptor 25 (358 aa).

Topologically, residues 1-43 (MQSTEPWSPSWGTLSWDYSGSGSLDQVELCPAWNLPYGHAIIP) are extracellular. The chain crosses the membrane as a helical span at residues 44–64 (ALYLAAFAVGLPGNAFVVWLL). Residues 65–76 (SRQRGPRRLVDT) lie on the Cytoplasmic side of the membrane. The chain crosses the membrane as a helical span at residues 77-97 (FVLHLAAADLGFVLTLPLWAA). Over 98-113 (AEARGGLWPFGDGLCK) the chain is Extracellular. An intrachain disulfide couples C112 to C191. Residues 114–134 (VSSFALAVTRCAGALLLAGMS) traverse the membrane as a helical segment. Topologically, residues 135-155 (VDRYLAVGRPLSARPLRSARC) are cytoplasmic. A helical membrane pass occupies residues 156–176 (VRAVCGAAWAAAFLAGLPALL). Topologically, residues 177 to 200 (YRGLQPSLDGVGSQCAEEPWEALQ) are extracellular. A helical membrane pass occupies residues 201–221 (GVGLLLLLLTFALPLAVTLIC). Residues 222–239 (YWRVSRRLPRVGRARSNS) lie on the Cytoplasmic side of the membrane. A helical membrane pass occupies residues 240–260 (LRIIFTVESVFVGCWLPFGVL). At 261-284 (RSLFHLARLQALPLPCSLLLALRW) the chain is on the extracellular side. Residues 285–307 (GLTVTTCLAFVNSSANPVIYLLL) form a helical membrane-spanning segment. The Cytoplasmic segment spans residues 308 to 358 (DRSFRARARFGLCARAGRQVRRISSASSLSRDDSSVFRGRSPKVNSASATW). Residues 339–358 (DDSSVFRGRSPKVNSASATW) form a disordered region.

Belongs to the G-protein coupled receptor 1 family.

It is found in the membrane. Orphan receptor. The chain is Probable G-protein coupled receptor 25 (Gpr25) from Mus musculus (Mouse).